The following is a 143-amino-acid chain: Subtelomeric hrmA-associated cluster protein cgnA (143 aa).

G-Q-I/R/S repeat units lie at residues 11 to 13, 14 to 16, 17 to 19, 20 to 22, 23 to 25, 26 to 28, 29 to 31, 32 to 34, 35 to 37, 38 to 40, 41 to 43, 44 to 46, 47 to 49, 50 to 52, 53 to 55, 56 to 58, 59 to 61, 62 to 64, 65 to 67, 68 to 70, 71 to 73, 74 to 76, 77 to 79, 80 to 82, 83 to 85, 86 to 88, 89 to 91, 92 to 94, and 95 to 97; these read GQI, GPI, GQR, GQS, and GQA. The Collagen-like domain maps to 11–68; that stretch reads GQIGPIGQRGQSGQRGQSGQRGQSGQIGQSGQSGQSGQIGQIGQIGQIGQIGQIGQIG. The segment at 11–97 is 29 X 3 AA approximate tandem repeats of G-Q-I/R/S; it reads GQIGPIGQRG…IGQIGQIGQA (87 aa). The interval 16–49 is disordered; it reads IGQRGQSGQRGQSGQRGQSGQIGQSGQSGQSGQI.

Its subcellular location is the secreted. Functionally, collagen-like protein; part of the subtelomeric hrmA-associated cluster (HAC) containing genes that alter the hyphal surface (such as reduced total chitin or increased beta-glucan exposure) and perturb inter-hyphal interactions within the developing biofilms, resulting in a loss of vertically aligned polarized growing filaments. Consequently, this hypoxia-typic morphotype (called H-MORPH) with altered biofilm architecture leads to increased hypoxia fitness, increased host inflammation, rapid disease progression, and mortality in a murine model of invasive aspergillosis. CgnA is directly involved in the reduction of total surface chitin and the increase of beta-glucan exposure, and mediates the detachment of the extracellular matrix and especially of its component galactosaminogalactan (GAG). The protein is Subtelomeric hrmA-associated cluster protein cgnA of Aspergillus fumigatus (strain ATCC MYA-4609 / CBS 101355 / FGSC A1100 / Af293) (Neosartorya fumigata).